The sequence spans 123 residues: ATP synthase epsilon chain (123 aa).

It belongs to the ATPase epsilon chain family. As to quaternary structure, F-type ATPases have 2 components, CF(1) - the catalytic core - and CF(0) - the membrane proton channel. CF(1) has five subunits: alpha(3), beta(3), gamma(1), delta(1), epsilon(1). CF(0) has three main subunits: a, b and c.

The protein resides in the cell inner membrane. Its function is as follows. Produces ATP from ADP in the presence of a proton gradient across the membrane. The protein is ATP synthase epsilon chain of Helicobacter pylori (strain Shi470).